Here is a 288-residue protein sequence, read N- to C-terminus: Zinc finger protein 42 (288 aa).

Basic and acidic residues-rich tracts occupy residues 1 to 11 and 26 to 38; these read MNEQKMNEQMK and ALDR…DEAR. The interval 1-48 is disordered; sequence MNEQKMNEQMKKTAKTSGQKGPGGRALDRLTLKQDEARPVQNTRVEAP. C2H2-type zinc fingers lie at residues 170-194, 199-221, 227-251, and 258-281; these read LECP…MLVH, HVCA…FLVH, YQCT…IRIH, and VCPF…ILTH. Glycyl lysine isopeptide (Lys-Gly) (interchain with G-Cter in ubiquitin) cross-links involve residues lysine 213 and lysine 215.

This sequence belongs to the krueppel C2H2-type zinc-finger protein family. Post-translationally, polyubiquitinated by RNF12, leading to proteasomal degradation. Restricted to testis, to germ cells in the early stages of spermatogenesis. Not expressed in spermatids, nor spermatozoa. Expressed in embryonic stem (ES) cells.

Its subcellular location is the nucleus. Its function is as follows. Involved in the reprogramming of X-chromosome inactivation during the acquisition of pluripotency. Required for efficient elongation of TSIX, a non-coding RNA antisense to XIST. Binds DXPas34 enhancer within the TSIX promoter. Involved in ES cell self-renewal. In Mus musculus (Mouse), this protein is Zinc finger protein 42 (Zfp42).